Consider the following 1044-residue polypeptide: Eukaryotic translation initiation factor 3 subunit A (1044 aa).

Positions L92–A121 form a coiled coil. Positions M339–F523 constitute a PCI domain. Positions I611–G907 form a coiled coil. The segment covering S797–R901 has biased composition (basic and acidic residues). The segment at S797–S1044 is disordered. 2 stretches are compositionally biased toward low complexity: residues K943–A956 and S1006–T1017.

The protein belongs to the eIF-3 subunit A family. In terms of assembly, component of the eukaryotic translation initiation factor 3 (eIF-3) complex.

The protein localises to the cytoplasm. RNA-binding component of the eukaryotic translation initiation factor 3 (eIF-3) complex, which is involved in protein synthesis of a specialized repertoire of mRNAs and, together with other initiation factors, stimulates binding of mRNA and methionyl-tRNAi to the 40S ribosome. The eIF-3 complex specifically targets and initiates translation of a subset of mRNAs involved in cell proliferation. The chain is Eukaryotic translation initiation factor 3 subunit A (tif32) from Aspergillus clavatus (strain ATCC 1007 / CBS 513.65 / DSM 816 / NCTC 3887 / NRRL 1 / QM 1276 / 107).